The following is a 224-amino-acid chain: Lipoprotein-releasing system ATP-binding protein LolD (224 aa).

Residues 5–224 enclose the ABC transporter domain; that stretch reads LRAENIKKVI…GKVVGEITRV (220 aa). ATP is bound at residue 37 to 44; it reads GASGSGKS.

Belongs to the ABC transporter superfamily. Lipoprotein translocase (TC 3.A.1.125) family. In terms of assembly, the complex is composed of two ATP-binding proteins (LolD) and two transmembrane proteins (LolC and LolE).

The protein localises to the cell inner membrane. Its function is as follows. Part of the ABC transporter complex LolCDE involved in the translocation of mature outer membrane-directed lipoproteins, from the inner membrane to the periplasmic chaperone, LolA. Responsible for the formation of the LolA-lipoprotein complex in an ATP-dependent manner. The protein is Lipoprotein-releasing system ATP-binding protein LolD of Aquifex aeolicus (strain VF5).